The following is a 141-amino-acid chain: U-scoloptoxin(17)-Er3a (141 aa).

An N-terminal signal peptide occupies residues 1–21; it reads MKSTFALVFGILMVIAHLSFA.

The protein belongs to the scoloptoxin-17 family. Contains 3 disulfide bonds. As to expression, expressed by the venom gland.

It is found in the secreted. The chain is U-scoloptoxin(17)-Er3a from Ethmostigmus rubripes (Giant centipede).